The sequence spans 161 residues: Endoribonuclease YbeY (161 aa).

His121, His125, and His131 together coordinate Zn(2+).

This sequence belongs to the endoribonuclease YbeY family. Zn(2+) is required as a cofactor.

It localises to the cytoplasm. Single strand-specific metallo-endoribonuclease involved in late-stage 70S ribosome quality control and in maturation of the 3' terminus of the 16S rRNA. This Xanthomonas euvesicatoria pv. vesicatoria (strain 85-10) (Xanthomonas campestris pv. vesicatoria) protein is Endoribonuclease YbeY.